A 373-amino-acid chain; its full sequence is MRTTKKSSKKGIPLNLMVVGDVGLGRTAFINTLCEKPLIRHNNNFDPAEASSVSPVEIVPYQTDIILEDGTKINLTVLDTPHFGEAIDNENNFDIILQYIESQYDNVLEEESRIKRNARFCDDRVHALIYFISPTGHGLRELDIELMRRLAPRVNIIPAIAKADSLTAQELQTTKEMINADIEYYKIPVYDFPYDIEEDEEAIINLSQQLRATIPFAIVSSDRLIEMNGQTVRGRAYPWGVVEVDNPRHSDFLALRSALFATHIEDLHNITSNQLYETYRTEKLSTSQLLLDSTVGLDGKNLSQHDQVLREDRLRAIELSVQKEIEEKRRQLLAREEALRALEEKLAASTAAMANASVSTLPSSVSSTNHSQS.

Residues Lys10–Thr286 enclose the Septin-type G domain. Residues Gly20–Thr27 form a G1 motif region. Gly20–Thr27 is a GTP binding site. Residues Asp79–His82 are G3 motif. The segment at Ala161–Asp164 is G4 motif. Residues Lys162 to Glu170 and Arg235 contribute to the GTP site. Ser303 is modified (phosphoserine). The stretch at Glu311–Ser357 forms a coiled coil.

This sequence belongs to the TRAFAC class TrmE-Era-EngA-EngB-Septin-like GTPase superfamily. Septin GTPase family. Component of the septin complex composed of two copies of each spn1, spn2, spn3 and spn4.

The protein resides in the cytoplasm. The protein localises to the cell cortex. Its function is as follows. Plays a role in the cell cycle. Involved in a late stage of septum formation leading to the separation of the daughter cells. The chain is Septin homolog spn3 (spn3) from Schizosaccharomyces pombe (strain 972 / ATCC 24843) (Fission yeast).